Here is a 28-residue protein sequence, read N- to C-terminus: Grammistin Gs A (28 aa).

It belongs to the grammistin family. Group 3 subfamily. As to quaternary structure, exists as aggregates of 3-4 molecules. As to expression, expressed by the skin glands.

It is found in the secreted. Thanks to its amphiphilic alpha-helice(s), it may integrate into membrane phospholipids, leading to lysis of the membrane. Has no substantial hemolytic activity. Has antibacterial activity with a broad spectrum against various species of bacteria including both Gram-positive and Gram-negative groups. This is Grammistin Gs A from Grammistes sexlineatus (Goldenstriped soapfish).